The following is a 345-amino-acid chain: NADH-quinone oxidoreductase subunit H (345 aa).

8 helical membrane-spanning segments follow: residues 15–35 (MLLQ…FMVY), 82–102 (FVYF…FVVI), 115–135 (VGIL…IMGG), 161–181 (LGLI…TAIV), 190–210 (LLNW…VSAL), 240–262 (YLLF…SLLF), 278–298 (WWMV…KAIV), and 309–329 (IGWK…AILA).

It belongs to the complex I subunit 1 family. NDH-1 is composed of at least 14 different subunits, Nqo1 to Nqo14. The complex has a L-shaped structure, with the hydrophobic arm (subunits Nqo7, Nqo8, Nqo10 to Nqo14) embedded in the inner membrane and the hydrophilic peripheral arm (subunits Nqo1 to Nqo6, Nqo9) protruding into the bacterial cytoplasm. The hydrophilic domain contains all the redox centers. NADH-quinone oxidoreductase forms a supercomplex with ubiquinol-cytochrome c reductase complex (complex III or cytochrome b-c1 complex) and cytochrome c oxidase (complex IV), which stabilizes the NADH-quinone oxidoreductase complex.

Its subcellular location is the cell inner membrane. The enzyme catalyses a quinone + NADH + 5 H(+)(in) = a quinol + NAD(+) + 4 H(+)(out). Functionally, NDH-1 shuttles electrons from NADH, via FMN and iron-sulfur (Fe-S) centers, to quinones in the respiratory chain. The immediate electron acceptor for the enzyme in this species is believed to be ubiquinone. Couples the redox reaction to proton translocation (for every two electrons transferred, four hydrogen ions are translocated across the cytoplasmic membrane), and thus conserves the redox energy in a proton gradient. This subunit may bind ubiquinone. The protein is NADH-quinone oxidoreductase subunit H of Paracoccus denitrificans (strain Pd 1222).